Consider the following 392-residue polypeptide: MPNFKSKKIKEINLPYSKDDVEFLWLAKNDNVSLIYTKVQEESFFLQIKKAQNGFVIKGDKHTKPSKIGYLQKALKIFKEGFCEDIINEAFGLKNNALIEKTPFIVDNFDELLSRLQGKIYIEIGFGSGRHLLYQAKENPNVLILGVEIYNPALTQVAKLAKAQNVNNILLIQSDARLLLSVLKSKSVEKIFLHFPVPWDKKPHRRVIGKDFCKECARVLTQNGRFELRTDSFEYFNFTLEQFLTFPVPKFSLRKNENLEISSKYEDRWKKQEKNIYDLWVWNFNQECKNYELNEFNLSSVEFSKEDLKKIEQNFKNITIKKDDFFLHFESIYKQDENLLLKVAFGAFNKPEHCYLHLDKTIDFAFKEPFKIQENIKAINELKEILKVQFKI.

Residues glutamate 123, glutamate 148, and aspartate 175 each contribute to the S-adenosyl-L-methionine site. The substrate site is built by lysine 201 and aspartate 231.

The protein belongs to the class I-like SAM-binding methyltransferase superfamily. TrmB family.

It carries out the reaction guanosine(46) in tRNA + S-adenosyl-L-methionine = N(7)-methylguanosine(46) in tRNA + S-adenosyl-L-homocysteine. The protein operates within tRNA modification; N(7)-methylguanine-tRNA biosynthesis. In terms of biological role, catalyzes the formation of N(7)-methylguanine at position 46 (m7G46) in tRNA. The protein is tRNA (guanine-N(7)-)-methyltransferase of Campylobacter jejuni (strain RM1221).